The primary structure comprises 254 residues: Probable glucose-1-phosphate cytidylyltransferase (254 aa).

Substrate is bound by residues 6–10 (LCGGK), 11–13 (GTR), Lys23, Thr103, Arg108, and Gly126. Mg(2+) contacts are provided by Asp127 and Asp232.

It belongs to the glucose-1-phosphate cytidylyltransferase family. The cofactor is Mg(2+).

It carries out the reaction alpha-D-glucose 1-phosphate + CTP + H(+) = CDP-D-glucose + diphosphate. Its function is as follows. Catalyzes the transfer of a CMP moiety from CTP to glucose 1-phosphate. The chain is Probable glucose-1-phosphate cytidylyltransferase (yfnH) from Bacillus subtilis (strain 168).